The sequence spans 218 residues: DNA-directed RNA polymerases IV and V subunit 5B (218 aa).

It belongs to the archaeal Rpo5/eukaryotic RPB5 RNA polymerase subunit family. Component of the RNA polymerase IV and V complexes. Interacts with NRPD1. As to expression, expressed inleaves, flower buds, flowers and siliques.

It is found in the nucleus. In terms of biological role, DNA-dependent RNA polymerase catalyzes the transcription of DNA into RNA using the four ribonucleoside triphosphates as substrates. Component of RNA polymerases IV and V which mediate short-interfering RNAs (siRNA) accumulation and subsequent RNA-directed DNA methylation-dependent (RdDM) transcriptional gene silencing (TGS) of endogenous repeated sequences, including transposable elements. The protein is DNA-directed RNA polymerases IV and V subunit 5B (NRPD5B) of Arabidopsis thaliana (Mouse-ear cress).